The primary structure comprises 261 residues: 3-deoxy-manno-octulosonate cytidylyltransferase 1 (261 aa).

Belongs to the KdsB family.

It localises to the cytoplasm. It catalyses the reaction 3-deoxy-alpha-D-manno-oct-2-ulosonate + CTP = CMP-3-deoxy-beta-D-manno-octulosonate + diphosphate. The protein operates within nucleotide-sugar biosynthesis; CMP-3-deoxy-D-manno-octulosonate biosynthesis; CMP-3-deoxy-D-manno-octulosonate from 3-deoxy-D-manno-octulosonate and CTP: step 1/1. It functions in the pathway bacterial outer membrane biogenesis; lipopolysaccharide biosynthesis. Activates KDO (a required 8-carbon sugar) for incorporation into bacterial lipopolysaccharide in Gram-negative bacteria. This chain is 3-deoxy-manno-octulosonate cytidylyltransferase 1, found in Burkholderia lata (strain ATCC 17760 / DSM 23089 / LMG 22485 / NCIMB 9086 / R18194 / 383).